Reading from the N-terminus, the 148-residue chain is MATKIKLQRLGKMREPHYRIVVADARTKRDGRVIESIGQYHPKSDPSIIKVDAERVGHWLSVGAQPTEPVLAILKVTGDWQKFKNLPAPPPMKVAEPKADKREIFQAAARAAAGAEDRPATTPKKAKKSGSAEEAEAAPATDAPAAGQ.

The disordered stretch occupies residues 106–148 (QAAARAAAGAEDRPATTPKKAKKSGSAEEAEAAPATDAPAAGQ). The span at 137–148 (AAPATDAPAAGQ) shows a compositional bias: low complexity.

This sequence belongs to the bacterial ribosomal protein bS16 family.

This is Small ribosomal subunit protein bS16 from Frankia casuarinae (strain DSM 45818 / CECT 9043 / HFP020203 / CcI3).